A 347-amino-acid polypeptide reads, in one-letter code: Autoinducer 2 import system permease protein LsrC (347 aa).

9 consecutive transmembrane segments (helical) span residues 14–34 (LLAI…YLSV), 39–59 (MVFS…MVML), 72–92 (GMCA…PVAC), 93–113 (LATL…VAWL), 115–135 (IPAI…MLLW), 155–175 (VFLG…LMAW), 213–233 (LNGG…GFIP), 249–269 (VLGG…ILGA), and 284–304 (IPAW…LVFD).

It belongs to the binding-protein-dependent transport system permease family. AraH/RbsC subfamily. As to quaternary structure, the complex is composed of two ATP-binding proteins (LsrA), two transmembrane proteins (LsrC and LsrD) and a solute-binding protein (LsrB).

It localises to the cell inner membrane. Functionally, part of the ABC transporter complex LsrABCD involved in autoinducer 2 (AI-2) import. Probably responsible for the translocation of the substrate across the membrane. This is Autoinducer 2 import system permease protein LsrC (lsrC) from Salmonella typhi.